We begin with the raw amino-acid sequence, 318 residues long: Protein OPG137 (318 aa).

A coiled-coil region spans residues Val145–Ser172.

This sequence belongs to the orthopoxvirus OPG137 family. As to quaternary structure, homomultimer. Interacts with OPG160. Phosphorylated by a OPG054-independent mechanism.

Its subcellular location is the host cytoplasm. Required for viral crescent formation early during virus morphogenesis. The protein is Protein OPG137 (OPG137) of Vaccinia virus (strain Ankara) (VACV).